Reading from the N-terminus, the 285-residue chain is Probable fructose-bisphosphate aldolase (285 aa).

Residue serine 50 coordinates D-glyceraldehyde 3-phosphate. The active-site Proton donor is the aspartate 85. The Zn(2+) site is built by histidine 86, aspartate 107, glutamate 137, and histidine 181. Glycine 182 contributes to the dihydroxyacetone phosphate binding site. Histidine 209 contributes to the Zn(2+) binding site. Residues 210–212 and 231–234 each bind dihydroxyacetone phosphate; these read GGT and NVNT. Phosphothreonine occurs at positions 212 and 234.

This sequence belongs to the class II fructose-bisphosphate aldolase family. It depends on Zn(2+) as a cofactor. In terms of processing, phosphorylated during sporulation.

The catalysed reaction is beta-D-fructose 1,6-bisphosphate = D-glyceraldehyde 3-phosphate + dihydroxyacetone phosphate. It functions in the pathway carbohydrate degradation; glycolysis; D-glyceraldehyde 3-phosphate and glycerone phosphate from D-glucose: step 4/4. Catalyzes the aldol condensation of dihydroxyacetone phosphate (DHAP or glycerone-phosphate) with glyceraldehyde 3-phosphate (G3P) to form fructose 1,6-bisphosphate (FBP) in gluconeogenesis and the reverse reaction in glycolysis. The polypeptide is Probable fructose-bisphosphate aldolase (fbaA) (Bacillus subtilis (strain 168)).